The primary structure comprises 459 residues: Cysteine--tRNA ligase (459 aa).

A Zn(2+)-binding site is contributed by Cys-31. The short motif at 33–43 (PTVYYNPHIGN) is the 'HIGH' region element. Residues Cys-216, His-241, and Glu-245 each coordinate Zn(2+). The 'KMSKS' region motif lies at 274 to 278 (KMSKS). Position 277 (Lys-277) interacts with ATP.

The protein belongs to the class-I aminoacyl-tRNA synthetase family. Monomer. Requires Zn(2+) as cofactor.

It is found in the cytoplasm. The catalysed reaction is tRNA(Cys) + L-cysteine + ATP = L-cysteinyl-tRNA(Cys) + AMP + diphosphate. This is Cysteine--tRNA ligase from Rickettsia rickettsii (strain Iowa).